Consider the following 432-residue polypeptide: MQLLTIGINHHTAPVALRERVAFPLEQIKPALVTFKNVFLGPHAPNAPEAAILSTCNRTELYCATDDRAAREGAIRWLSEYHRIPVDELAPHVYALPQSEAVRHAFRVASGLDSMVLGETQILGQMKDAVRTATEAGALGTYLNQLFQRTFAVAKEVRGTTEIGAQSVSMAAAAVRLAQRIFETVSDQRVLFIGAGEMIELCATHFAAQSPRELVIANRTAERGQRLAERFNGRAMPLSDLPTRMHEFDIIVSCTASTLPIIGLGAVERAVKARRHRPIFMVDLAVPRDIEPEVGKLKDVFLYTVDDLGAIVREGNASRQAAVAQAETIIETRVQNFMQWLDTRSVVPVIRHMHTQADALRRAEVEKAQKLLARGDDPAAVLEALSQALTNKLIHGPTSALNRVNGADRDSLIDLMRGFYQHAPRSNDQSGH.

Residues 55–58, serine 114, 119–121, and glutamine 125 each bind substrate; these read TCNR and ETQ. Catalysis depends on cysteine 56, which acts as the Nucleophile. 194–199 provides a ligand contact to NADP(+); sequence GAGEMI.

The protein belongs to the glutamyl-tRNA reductase family. As to quaternary structure, homodimer.

The catalysed reaction is (S)-4-amino-5-oxopentanoate + tRNA(Glu) + NADP(+) = L-glutamyl-tRNA(Glu) + NADPH + H(+). It participates in porphyrin-containing compound metabolism; protoporphyrin-IX biosynthesis; 5-aminolevulinate from L-glutamyl-tRNA(Glu): step 1/2. Its function is as follows. Catalyzes the NADPH-dependent reduction of glutamyl-tRNA(Glu) to glutamate 1-semialdehyde (GSA). The polypeptide is Glutamyl-tRNA reductase (Burkholderia ambifaria (strain MC40-6)).